A 354-amino-acid chain; its full sequence is UDP-N-acetylglucosamine--N-acetylmuramyl-(pentapeptide) pyrophosphoryl-undecaprenol N-acetylglucosamine transferase (354 aa).

Residues 11 to 13 (TAG), Arg-164, Ser-194, and Gln-289 contribute to the UDP-N-acetyl-alpha-D-glucosamine site.

It belongs to the glycosyltransferase 28 family. MurG subfamily.

Its subcellular location is the cell membrane. The enzyme catalyses di-trans,octa-cis-undecaprenyl diphospho-N-acetyl-alpha-D-muramoyl-L-alanyl-D-glutamyl-meso-2,6-diaminopimeloyl-D-alanyl-D-alanine + UDP-N-acetyl-alpha-D-glucosamine = di-trans,octa-cis-undecaprenyl diphospho-[N-acetyl-alpha-D-glucosaminyl-(1-&gt;4)]-N-acetyl-alpha-D-muramoyl-L-alanyl-D-glutamyl-meso-2,6-diaminopimeloyl-D-alanyl-D-alanine + UDP + H(+). It functions in the pathway cell wall biogenesis; peptidoglycan biosynthesis. Functionally, cell wall formation. Catalyzes the transfer of a GlcNAc subunit on undecaprenyl-pyrophosphoryl-MurNAc-pentapeptide (lipid intermediate I) to form undecaprenyl-pyrophosphoryl-MurNAc-(pentapeptide)GlcNAc (lipid intermediate II). This is UDP-N-acetylglucosamine--N-acetylmuramyl-(pentapeptide) pyrophosphoryl-undecaprenol N-acetylglucosamine transferase from Clostridium botulinum (strain Langeland / NCTC 10281 / Type F).